Reading from the N-terminus, the 352-residue chain is rRNA 2'-O-methyltransferase fibrillarin (352 aa).

A disordered region spans residues 1–115 (MGRPEFNRGG…GGAGGMRGGK (115 aa)). 22 positions are modified to asymmetric dimethylarginine: arginine 8, arginine 16, arginine 19, arginine 23, arginine 27, arginine 35, arginine 43, arginine 51, arginine 55, arginine 58, arginine 63, arginine 67, arginine 70, arginine 75, arginine 81, arginine 85, arginine 91, arginine 95, arginine 98, arginine 102, arginine 105, and arginine 112. Residues 8–18 (RGGGGGGFRGG) are compositionally biased toward gly residues. Residues 26-59 (SRGGFGGGGRGGYGGGDRGSFGGGDRGGFRGGRG) are compositionally biased toward gly residues. The span at 66-113 (FRGGRGGGDRGGFGGRGSPRGGFGGRGSPRGGRGSPRGGRGGAGGMRG) shows a compositional bias: gly residues. Residues 203-204 (TT), 222-223 (EF), 247-248 (DA), and 267-270 (DVAQ) each bind S-adenosyl-L-methionine.

Belongs to the methyltransferase superfamily. Fibrillarin family. As to quaternary structure, component of box C/D small nucleolar ribonucleoprotein (snoRNP) particles. It is associated with the U3, U8 and U13 small nuclear RNAs. In terms of processing, by homology to other fibrillarins, some or all of the N-terminal domain arginines are modified to asymmetric dimethylarginine (DMA).

The protein resides in the nucleus. The protein localises to the nucleolus. Its subcellular location is the nucleoplasm. The enzyme catalyses L-glutaminyl-[histone H2A] + S-adenosyl-L-methionine = N(5)-methyl-L-glutaminyl-[histone H2A] + S-adenosyl-L-homocysteine + H(+). Functionally, S-adenosyl-L-methionine-dependent methyltransferase that has the ability to methylate both RNAs and proteins. Involved in pre-rRNA processing. Utilizes the methyl donor S-adenosyl-L-methionine to catalyze the site-specific 2'-hydroxyl methylation of ribose moieties in pre-ribosomal RNA. Site specificity is provided by a guide RNA that base pairs with the substrate. Methylation occurs at a characteristic distance from the sequence involved in base pairing with the guide RNA. Also acts as a protein methyltransferase by mediating methylation of 'Gln-105' of histone H2A (H2AQ105me), a modification that impairs binding of the FACT complex and is specifically present at 35S ribosomal DNA locus. Plays a role in modulation of nucleolus size most likely through regulating the ribosomal RNA (rRNA) pool. The sequence is that of rRNA 2'-O-methyltransferase fibrillarin from Caenorhabditis elegans.